Reading from the N-terminus, the 343-residue chain is Glucokinase (343 aa).

Residue 21 to 26 (ADVGGT) participates in ATP binding.

This sequence belongs to the bacterial glucokinase family.

It is found in the cytoplasm. The catalysed reaction is D-glucose + ATP = D-glucose 6-phosphate + ADP + H(+). This Cupriavidus pinatubonensis (strain JMP 134 / LMG 1197) (Cupriavidus necator (strain JMP 134)) protein is Glucokinase.